We begin with the raw amino-acid sequence, 230 residues long: Type II restriction enzyme SinI (230 aa).

The catalysed reaction is Endonucleolytic cleavage of DNA to give specific double-stranded fragments with terminal 5'-phosphates.. Functionally, a P subtype restriction enzyme that recognizes the double-stranded sequence 5'-GGWCC-3' and cleaves after G-1. In Salmonella infantis, this protein is Type II restriction enzyme SinI (sinIR).